The following is a 267-amino-acid chain: Type III pantothenate kinase (267 aa).

Residue 6-13 participates in ATP binding; that stretch reads DVRNTHTT. 109–112 serves as a coordination point for substrate; the sequence is GADR. The active-site Proton acceptor is the Asp-111. Residue Asp-131 coordinates K(+). An ATP-binding site is contributed by Ser-134. Thr-186 is a substrate binding site.

This sequence belongs to the type III pantothenate kinase family. As to quaternary structure, homodimer. NH4(+) serves as cofactor. It depends on K(+) as a cofactor.

It localises to the cytoplasm. The enzyme catalyses (R)-pantothenate + ATP = (R)-4'-phosphopantothenate + ADP + H(+). It participates in cofactor biosynthesis; coenzyme A biosynthesis; CoA from (R)-pantothenate: step 1/5. Its function is as follows. Catalyzes the phosphorylation of pantothenate (Pan), the first step in CoA biosynthesis. The sequence is that of Type III pantothenate kinase from Mycobacterium sp. (strain JLS).